Here is a 116-residue protein sequence, read N- to C-terminus: Small ribosomal subunit protein uS13m (116 aa).

Belongs to the universal ribosomal protein uS13 family. Part of the small ribosomal subunit.

Its subcellular location is the mitochondrion. Located at the top of the head of the small subunit, it contacts several helices of the 18S rRNA. The protein is Small ribosomal subunit protein uS13m (RPS13) of Daucus carota (Wild carrot).